A 366-amino-acid chain; its full sequence is Alanine racemase (366 aa).

Lysine 33 acts as the Proton acceptor; specific for D-alanine in catalysis. Lysine 33 bears the N6-(pyridoxal phosphate)lysine mark. Arginine 129 serves as a coordination point for substrate. Catalysis depends on tyrosine 253, which acts as the Proton acceptor; specific for L-alanine. Methionine 301 is a binding site for substrate.

This sequence belongs to the alanine racemase family. Pyridoxal 5'-phosphate serves as cofactor.

It catalyses the reaction L-alanine = D-alanine. The protein operates within amino-acid biosynthesis; D-alanine biosynthesis; D-alanine from L-alanine: step 1/1. Functionally, catalyzes the interconversion of L-alanine and D-alanine. May also act on other amino acids. The protein is Alanine racemase (alr) of Xanthomonas oryzae pv. oryzae (strain KACC10331 / KXO85).